Here is a 60-residue protein sequence, read N- to C-terminus: Mastoparan-VT5 (60 aa).

The first 27 residues, 1–27 (MKNTILILFTAFIALLGFFGMIAEPLA), serve as a signal peptide directing secretion. AXPX repeat units lie at residues 27-30 (ADPL), 31-34 (ADPL), 37-40 (ADPD), and 41-44 (ADPE). A propeptide spanning residues 28–45 (DPLADPLPDADPDADPET) is cleaved from the precursor.

This sequence belongs to the MCD family. Mastoparan subfamily. Expressed by the venom gland.

It is found in the secreted. In terms of biological role, the synthetic peptide shows weak antimicrobial activities against a few Gram-positive bacteria (only 2 on the 11 strains tested) and the fungus C.albicans. Does not show activity against all the Gram-negative bacteria tested. Exhibits little hemolytic activity against washed human erythrocytes. This is Mastoparan-VT5 from Vespa tropica (Greater banded hornet).